The primary structure comprises 82 residues: Cytochrome b559 subunit alpha (82 aa).

Residues 22-36 form a helical membrane-spanning segment; sequence VIHAITLPSIFLAGF. H24 contacts heme.

This sequence belongs to the PsbE/PsbF family. As to quaternary structure, heterodimer of an alpha subunit and a beta subunit. PSII is composed of 1 copy each of membrane proteins PsbA, PsbB, PsbC, PsbD, PsbE, PsbF, PsbH, PsbI, PsbJ, PsbK, PsbL, PsbM, PsbT, PsbX, PsbY, PsbZ, Psb30/Ycf12, peripheral proteins PsbO, CyanoQ (PsbQ), PsbU, PsbV and a large number of cofactors. It forms dimeric complexes. Heme b serves as cofactor.

It is found in the cellular thylakoid membrane. Its function is as follows. This b-type cytochrome is tightly associated with the reaction center of photosystem II (PSII). PSII is a light-driven water:plastoquinone oxidoreductase that uses light energy to abstract electrons from H(2)O, generating O(2) and a proton gradient subsequently used for ATP formation. It consists of a core antenna complex that captures photons, and an electron transfer chain that converts photonic excitation into a charge separation. This chain is Cytochrome b559 subunit alpha, found in Synechococcus sp. (strain WH7803).